We begin with the raw amino-acid sequence, 367 residues long: Anhydro-N-acetylmuramic acid kinase (367 aa).

11 to 18 (GTSLDGVD) contacts ATP.

The protein belongs to the anhydro-N-acetylmuramic acid kinase family.

It catalyses the reaction 1,6-anhydro-N-acetyl-beta-muramate + ATP + H2O = N-acetyl-D-muramate 6-phosphate + ADP + H(+). The protein operates within amino-sugar metabolism; 1,6-anhydro-N-acetylmuramate degradation. It participates in cell wall biogenesis; peptidoglycan recycling. Functionally, catalyzes the specific phosphorylation of 1,6-anhydro-N-acetylmuramic acid (anhMurNAc) with the simultaneous cleavage of the 1,6-anhydro ring, generating MurNAc-6-P. Is required for the utilization of anhMurNAc either imported from the medium or derived from its own cell wall murein, and thus plays a role in cell wall recycling. This chain is Anhydro-N-acetylmuramic acid kinase, found in Rhodopseudomonas palustris (strain ATCC BAA-98 / CGA009).